The chain runs to 137 residues: Ribosomal RNA large subunit methyltransferase H (137 aa).

S-adenosyl-L-methionine-binding positions include L56, G85, and 104–109 (LSPLTL).

The protein belongs to the RNA methyltransferase RlmH family. As to quaternary structure, homodimer.

The protein localises to the cytoplasm. The enzyme catalyses pseudouridine(1915) in 23S rRNA + S-adenosyl-L-methionine = N(3)-methylpseudouridine(1915) in 23S rRNA + S-adenosyl-L-homocysteine + H(+). In terms of biological role, specifically methylates the pseudouridine at position 1915 (m3Psi1915) in 23S rRNA. This chain is Ribosomal RNA large subunit methyltransferase H, found in Thermus thermophilus (strain ATCC 27634 / DSM 579 / HB8).